The sequence spans 108 residues: MDASSQYSALPYPQPPRVPSAAPSAGRLPWSRVGEIVIFTFVSVLALYLLWLWVLKDCILLLKAQRGRSTEELIFGPGERPPVASADGSRPVPDPSPPVRRDLDLSRV.

Residues Met-1–Ala-25 form a disordered region. The chain crosses the membrane as a helical span at residues Glu-35–Leu-55. Residues Leu-73–Val-108 are disordered. A compositionally biased stretch (basic and acidic residues) spans Val-99 to Val-108.

Belongs to the mastrevirus movement protein family. Interacts with the capsid protein (CP). Part of a MP-CP-viral DNA complex.

It is found in the host membrane. Its function is as follows. Involved in the viral transport within, and between cells. This Megathyrsus maximus (PanSV) protein is Movement protein.